Reading from the N-terminus, the 393-residue chain is NAD(P)H-quinone oxidoreductase subunit H, chloroplastic (393 aa).

This sequence belongs to the complex I 49 kDa subunit family. As to quaternary structure, NDH is composed of at least 16 different subunits, 5 of which are encoded in the nucleus.

The protein resides in the plastid. Its subcellular location is the chloroplast thylakoid membrane. It carries out the reaction a plastoquinone + NADH + (n+1) H(+)(in) = a plastoquinol + NAD(+) + n H(+)(out). It catalyses the reaction a plastoquinone + NADPH + (n+1) H(+)(in) = a plastoquinol + NADP(+) + n H(+)(out). Functionally, NDH shuttles electrons from NAD(P)H:plastoquinone, via FMN and iron-sulfur (Fe-S) centers, to quinones in the photosynthetic chain and possibly in a chloroplast respiratory chain. The immediate electron acceptor for the enzyme in this species is believed to be plastoquinone. Couples the redox reaction to proton translocation, and thus conserves the redox energy in a proton gradient. The sequence is that of NAD(P)H-quinone oxidoreductase subunit H, chloroplastic from Cucumis sativus (Cucumber).